We begin with the raw amino-acid sequence, 319 residues long: L-lactate dehydrogenase (319 aa).

NAD(+) contacts are provided by residues V11, D32, R37, Y62, and 76–77 (GV). Substrate contacts are provided by residues Q79, R85, and 117–120 (NPVD). Residues 115-117 (VTN) and S140 each bind NAD(+). Residue 145–148 (DTAR) participates in substrate binding. Residues R150 and H165 each coordinate beta-D-fructose 1,6-bisphosphate. The active-site Proton acceptor is the H172. Y217 bears the Phosphotyrosine mark. T226 contributes to the substrate binding site.

The protein belongs to the LDH/MDH superfamily. LDH family. As to quaternary structure, homotetramer.

Its subcellular location is the cytoplasm. It catalyses the reaction (S)-lactate + NAD(+) = pyruvate + NADH + H(+). It functions in the pathway fermentation; pyruvate fermentation to lactate; (S)-lactate from pyruvate: step 1/1. Allosterically activated by fructose 1,6-bisphosphate (FBP). Catalyzes the conversion of lactate to pyruvate. This Thermotoga sp. (strain RQ2) protein is L-lactate dehydrogenase.